A 528-amino-acid chain; its full sequence is Poly(A) RNA polymerase GLD2 (528 aa).

Disordered regions lie at residues 1 to 41 (MYPN…QPQQ) and 99 to 121 (RDQS…KRRS). 2 stretches are compositionally biased toward low complexity: residues 16–32 (PCEQ…EQPL) and 102–113 (SPLISPASPSSS). Mg(2+)-binding residues include aspartate 259 and aspartate 261. Residues 428–481 (LGDLLLGFLKYFAIEFDWSKDIISVREAKALPRSDDYEWRNKFICVEEPYDRTN) enclose the PAP-associated domain.

This sequence belongs to the DNA polymerase type-B-like family. GLD2 subfamily. Component of a complex at least composed of cpeb1, cpsf1, tent2/gld2, pabpc1/ePAB, parn and sympk. Following oocyte maturation, parn is expelled from the complex. Interacts with rbm9 and sympk. Mg(2+) is required as a cofactor. Requires Mn(2+) as cofactor.

It is found in the cytoplasm. It catalyses the reaction RNA(n) + ATP = RNA(n)-3'-adenine ribonucleotide + diphosphate. In terms of biological role, cytoplasmic poly(A) RNA polymerase that adds successive AMP monomers to the 3'-end of specific RNAs, forming a poly(A) tail. In contrast to the canonical nuclear poly(A) RNA polymerase, it only adds poly(A) to selected cytoplasmic mRNAs during oocyte maturation. Plays a central role during oocyte maturation by mediating polyadenylation of dormant mRNAs, which contain 5'AAUAAA-3' sequence in their 3'-UTR. In immature oocytes, polyadenylation of poly(A) tails is counteracted by the ribonuclease parn. During maturation parn is excluded from the ribonucleoprotein complex, allowing poly(A) elongation and activation of mRNAs. May not play a role in replication-dependent histone mRNA degradation. The sequence is that of Poly(A) RNA polymerase GLD2 (tent2) from Xenopus tropicalis (Western clawed frog).